The primary structure comprises 60 residues: Small ribosomal subunit protein eS31 (60 aa).

The Zn(2+) site is built by cysteine 24, cysteine 27, cysteine 42, and cysteine 45. The C4-type zinc-finger motif lies at 24-45; sequence CPRCGPGVFMADHGNRYACGRC.

It belongs to the eukaryotic ribosomal protein eS31 family. As to quaternary structure, part of the 30S ribosomal subunit. Requires Zn(2+) as cofactor.

The protein is Small ribosomal subunit protein eS31 of Methanopyrus kandleri (strain AV19 / DSM 6324 / JCM 9639 / NBRC 100938).